Reading from the N-terminus, the 277-residue chain is MEMO1 family protein Tpet_0837 (277 aa).

This sequence belongs to the MEMO1 family.

The chain is MEMO1 family protein Tpet_0837 from Thermotoga petrophila (strain ATCC BAA-488 / DSM 13995 / JCM 10881 / RKU-1).